Consider the following 316-residue polypeptide: MNVITPPFADGVDPKPVCIVADDIFETMTARRKIHFSIYVIFKKNVELAEPFKLLYYTEKKNVAHLDGSVAQDFGLPMWTKDDGQRAPDLSRQKNDYIKLDFFTNINNPEDGFSYCWTDCISTKNTTMVPRQLMPPSKRSMKLYLILPVEESNIMVLSEKAYGSLQLMKKHRKMGQPPQRVGCYINFNCQTSKVMFGCGHVYCEQCLNSWNDKPCSVCLKPVTSEPTQLKLRQGPCPFDLCSPNSSTMGIVLIPCGCHVMCQNLEDAYERNKHHLEPLIEKIKYCPFEPCRIRVRKLKKPFWHQQDKEHTLEMNSA.

Residues 183–218 (CYINFNCQTSKVMFGCGHVYCEQCLNSWNDKPCSVC) form an RING-type; degenerate zinc finger.

As to quaternary structure, interacts (via RING-type zinc finger domain) with rde-10.

Functionally, in complex with rde-10, required in the endogenous and exogenous siRNA pathway for biogenesis and accumulation of secondary small interfering RNA (siRNA) intermediates, such as 22G-siRNAs derived from ergo-1 targets. The sequence is that of RNA interference defective protein 11 from Caenorhabditis elegans.